A 335-amino-acid polypeptide reads, in one-letter code: MQIGAATEGVEADLSVNAEPDVKPIAKMLSACVGSVITTLTVTPLDVVKTRLQSESISQYSSTQPISSAKILGKGRPAPKPLGGPVSGLYQIARHEGVRSLWRGLVPSLTMLLPANTVQFLGYEQLLPLYSDWGFPAAAAIAGASARTISATIVSPIELFRTRVQAVGGHYPPGHAREIANEVFDGLKLMIHQKGILNLWSGVSVTLWRDVPFSAFYWWSYERIRLFLLGHPSLQAFSSSQSTKDLYINFVSGGISGTLATLLTQPFDVSKTAKQVHGHTLTRGQFMLTLWKRGGPKALWKGTLPRCVKVAPSCAIMISSYHLTKKYFSESVDAY.

3 Solcar repeats span residues 22 to 129 (VKPI…LLPL), 134 to 227 (GFPA…IRLF), and 244 to 327 (KDLY…TKKY). 6 helical membrane-spanning segments follow: residues 28 to 48 (MLSA…LDVV), 104 to 123 (GLVP…FLGY), 133 to 154 (WGFP…ATIV), 195 to 219 (GILN…FYWW), 246 to 263 (LYIN…ATLL), and 307 to 323 (CVKV…SYHL).

This sequence belongs to the mitochondrial carrier (TC 2.A.29) family.

The protein localises to the mitochondrion inner membrane. This is an uncharacterized protein from Schizosaccharomyces pombe (strain 972 / ATCC 24843) (Fission yeast).